The chain runs to 254 residues: 3-dehydroquinate dehydratase (254 aa).

3-dehydroquinate-binding positions include 47 to 49 (EFR) and R83. H144 functions as the Proton donor/acceptor in the catalytic mechanism. The active-site Schiff-base intermediate with substrate is the K171. 3-dehydroquinate contacts are provided by R213, S232, and Q236.

This sequence belongs to the type-I 3-dehydroquinase family. In terms of assembly, homodimer.

It catalyses the reaction 3-dehydroquinate = 3-dehydroshikimate + H2O. It functions in the pathway metabolic intermediate biosynthesis; chorismate biosynthesis; chorismate from D-erythrose 4-phosphate and phosphoenolpyruvate: step 3/7. Functionally, involved in the third step of the chorismate pathway, which leads to the biosynthesis of aromatic amino acids. Catalyzes the cis-dehydration of 3-dehydroquinate (DHQ) and introduces the first double bond of the aromatic ring to yield 3-dehydroshikimate. The sequence is that of 3-dehydroquinate dehydratase from Neisseria meningitidis serogroup A / serotype 4A (strain DSM 15465 / Z2491).